The primary structure comprises 149 residues: Large ribosomal subunit protein uL22 (149 aa).

The protein belongs to the universal ribosomal protein uL22 family. As to quaternary structure, part of the 50S ribosomal subunit.

In terms of biological role, this protein binds specifically to 23S rRNA; its binding is stimulated by other ribosomal proteins, e.g. L4, L17, and L20. It is important during the early stages of 50S assembly. It makes multiple contacts with different domains of the 23S rRNA in the assembled 50S subunit and ribosome. The globular domain of the protein is located near the polypeptide exit tunnel on the outside of the subunit, while an extended beta-hairpin is found that lines the wall of the exit tunnel in the center of the 70S ribosome. This Petrotoga mobilis (strain DSM 10674 / SJ95) protein is Large ribosomal subunit protein uL22.